The following is a 249-amino-acid chain: 2,3-bisphosphoglycerate-dependent phosphoglycerate mutase (249 aa).

Residues 8-15 (RHGESTWN), 21-22 (TG), R60, 87-90 (ERHY), K98, 114-115 (RR), and 183-184 (GN) each bind substrate. The active-site Tele-phosphohistidine intermediate is H9. E87 functions as the Proton donor/acceptor in the catalytic mechanism.

Belongs to the phosphoglycerate mutase family. BPG-dependent PGAM subfamily.

It catalyses the reaction (2R)-2-phosphoglycerate = (2R)-3-phosphoglycerate. The protein operates within carbohydrate degradation; glycolysis; pyruvate from D-glyceraldehyde 3-phosphate: step 3/5. In terms of biological role, catalyzes the interconversion of 2-phosphoglycerate and 3-phosphoglycerate. This Methanoregula boonei (strain DSM 21154 / JCM 14090 / 6A8) protein is 2,3-bisphosphoglycerate-dependent phosphoglycerate mutase.